We begin with the raw amino-acid sequence, 51 residues long: Large ribosomal subunit protein eL39 (51 aa).

The protein belongs to the eukaryotic ribosomal protein eL39 family.

This Methanococcus aeolicus (strain ATCC BAA-1280 / DSM 17508 / OCM 812 / Nankai-3) protein is Large ribosomal subunit protein eL39.